We begin with the raw amino-acid sequence, 344 residues long: L-lactate dehydrogenase B (344 aa).

NAD(+)-binding positions include 62 to 67 (DALPDK) and Arg109. Arg116, Asn148, and Arg179 together coordinate substrate. Residue Asn148 coordinates NAD(+). Catalysis depends on His203, which acts as the Proton acceptor. Position 258 (Thr258) interacts with substrate.

Belongs to the LDH/MDH superfamily. LDH family. Tetramer that arise from random association of LDH-A and LDH-B.

The enzyme catalyses (S)-lactate + NAD(+) = pyruvate + NADH + H(+). The protein operates within fermentation; pyruvate fermentation to lactate; (S)-lactate from pyruvate: step 1/1. This chain is L-lactate dehydrogenase B, found in Hordeum vulgare (Barley).